Here is a 491-residue protein sequence, read N- to C-terminus: Diacylglycerol O-acyltransferase 1 (491 aa).

Positions 1–60 (MGDRGGAGGTRRRRTGSRPSSHGGGGPAAAEEEVRDAAAGPDMGAAGDAPAPAPSKDADD) are disordered. Residues 1–86 (MGDRGGAGGT…SLFSSDSGFN (86 aa)) are Cytoplasmic-facing. Positions 1 to 94 (MGDRGGAGGT…FNNYRGILNW (94 aa)) are involved in homomerization. Residues S20 and S21 each carry the phosphoserine modification. Over residues 37-50 (AAAGPDMGAAGDAP) the composition is skewed to low complexity. Residues 87–121 (NYRGILNWCVVMLILSNARLFLENLIKYGILVDPI) traverse the membrane as a helical segment. Topologically, residues 122-133 (QVVSLFLKDPYS) are lumenal. The extracellular loop 1 (EL1) stretch occupies residues 122-133 (QVVSLFLKDPYS). Residues 134-159 (WPAPCLVIAANVFAVAAFQVEKRLAV) traverse the membrane as a helical segment. The interval 134–491 (WPAPCLVIAA…LNYEAPVAGA (358 aa)) is MBOAT fold. At 160 to 164 (GALTE) the chain is on the cytoplasmic side. The helical transmembrane segment at 165–187 (QAGLLLHVANLATILCFPAAVVL) threads the bilayer. Over 188-194 (LVESITP) the chain is Lumenal. A helical transmembrane segment spans residues 195-226 (VGSLLALMVHTILFLKLFSYRDVNLWCRRARA). Residues 227 to 276 (KAASAGKRASSAAAPHTVSYPDNLTYRDLYYFLFAPTLCYELNFPRSPRI) lie on the Cytoplasmic side of the membrane. Residues 227–279 (KAASAGKRASSAAAPHTVSYPDNLTYRDLYYFLFAPTLCYELNFPRSPRIRKR) form an intracellular loop 1 (IL1) region. Residues 277 to 311 (RKRFLLRRILEMLFFTQLQVGLIQQWMVPTIQNSM) form a helical membrane-spanning segment. Residues 312–318 (KPFKDMD) lie on the Lumenal side of the membrane. The chain crosses the membrane as a helical span at residues 319–356 (YSRIIERLLKLAVPNHLIWLIFFYWLFHSCLNAVAELM). At 357–402 (QFGDREFYRDWWNSESVTYFWQNWNIPVHKWCIRHFYKPMLRRGSS) the chain is on the cytoplasmic side. The segment at 357–402 (QFGDREFYRDWWNSESVTYFWQNWNIPVHKWCIRHFYKPMLRRGSS) is intracellular loop 2 (IL2). The short motif at 363 to 369 (FYRDWWN) is the FYXDWWN motif element. An acyl-CoA-binding positions include 377–385 (WQNWNIPVH), Y393, and R407. Residues 383–397 (PVHKWCIRHFYKPML) are amphipathic helix (AH). Residues 403 to 423 (RWMARIGVFLASAFFHEYLVS) form a helical membrane-spanning segment. The active site involves H418. At 424–431 (VPLRMFRL) the chain is on the lumenal side. The chain crosses the membrane as a helical span at residues 432–450 (WAFTGMMAQIPLAWFVGRF). Residues 451-452 (FQ) are Cytoplasmic-facing. The helical transmembrane segment at 453-484 (GNYGNAAVWLTLIIGQPIAVLMYVHDYYVLNY) threads the bilayer. Y480 contributes to the an acyl-CoA binding site. Residues 485–491 (EAPVAGA) are Lumenal-facing.

It belongs to the membrane-bound acyltransferase family. Sterol o-acyltransferase subfamily. In terms of assembly, homodimer or homotetramer; both forms have similar enzymatic activities.

Its subcellular location is the endoplasmic reticulum membrane. It carries out the reaction an acyl-CoA + a 1,2-diacyl-sn-glycerol = a triacyl-sn-glycerol + CoA. It catalyses the reaction all-trans-retinol + an acyl-CoA = an all-trans-retinyl ester + CoA. The catalysed reaction is 2-(9Z-octadecenoyl)-glycerol + (9Z)-octadecenoyl-CoA = 1,2-di-(9Z-octadecenoyl)-sn-glycerol + CoA. The enzyme catalyses 1,2-di-(9Z-octadecenoyl)-sn-glycerol + (9Z)-octadecenoyl-CoA = 1,2,3-tri-(9Z-octadecenoyl)-glycerol + CoA. It carries out the reaction all-trans-retinol + hexadecanoyl-CoA = all-trans-retinyl hexadecanoate + CoA. It catalyses the reaction 1-O-(9Z-octadecenyl)-glycerol + (9Z)-octadecenoyl-CoA = 1-O-(9Z-octadecyl)-3-(9Z-octadecenoyl)-glycerol + CoA. The catalysed reaction is 1-O-(9Z-octadecyl)-3-(9Z-octadecenoyl)-glycerol + (9Z)-octadecenoyl-CoA = 1-O-(9Z-octadecenyl)-2,3-di-(9Z-octadecenoyl)glycerol + CoA. The enzyme catalyses 1-(9Z-octadecenoyl)-glycerol + (9Z)-octadecenoyl-CoA = 1,2-di-(9Z-octadecenoyl)-glycerol + CoA. It carries out the reaction 1,2-di-(9Z-octadecenoyl)-glycerol + (9Z)-octadecenoate + H(+) = 1,2,3-tri-(9Z-octadecenoyl)-glycerol + H2O. It catalyses the reaction 1-octadecanoyl-2-(5Z,8Z,11Z,14Z-eicosatetraenoyl)-sn-glycerol + (9Z)-octadecenoyl-CoA = 1-octadecanoyl-2-(5Z,8Z,11Z,14Z)-eicosatetraenoyl-3-(9Z)-octadecenoyl-sn-glycerol + CoA. The catalysed reaction is hexadecane-1,2-diol + 2 hexadecanoyl-CoA = 1,2-O,O-dihexadecanoyl-1,2-hexadecanediol + 2 CoA. The enzyme catalyses hexadecane-1,2-diol + hexadecanoyl-CoA = 2-hydroxyhexadecyl hexadecanoate + CoA. It carries out the reaction 2-(9Z-octadecenoyl)-glycerol + hexadecanoyl-CoA = 1-hexadecanoyl-2-(9Z-octadecenoyl)-sn-glycerol + CoA. It catalyses the reaction 1,2-di-(9Z-octadecenoyl)-sn-glycerol + hexadecanoyl-CoA = 1,2-di-(9Z)-octadecenoyl-3-hexadecanoyl-sn-glycerol + CoA. The catalysed reaction is hexadecan-1-ol + hexadecanoyl-CoA = hexadecanyl hexadecanoate + CoA. The enzyme catalyses 13-cis-retinol + hexadecanoyl-CoA = 13-cis-retinyl hexadecanoate + CoA. It carries out the reaction 1,3-di-(9Z-octadecenoyl)-glycerol + (9Z)-octadecenoyl-CoA = 1,2,3-tri-(9Z-octadecenoyl)-glycerol + CoA. It catalyses the reaction 2,3-di-(9Z)-octadecenoyl-sn-glycerol + (9Z)-octadecenoyl-CoA = 1,2,3-tri-(9Z-octadecenoyl)-glycerol + CoA. The protein operates within lipid metabolism; glycerolipid metabolism. Functionally, catalyzes the terminal and only committed step in triacylglycerol synthesis by using diacylglycerol and fatty acyl CoA as substrates. Highly expressed in epithelial cells of the small intestine and its activity is essential for the absorption of dietary fats. In liver, plays a role in esterifying exogenous fatty acids to glycerol, and is required to synthesize fat for storage. Also present in female mammary glands, where it produces fat in the milk. May be involved in VLDL (very low density lipoprotein) assembly. In contrast to DGAT2 it is not essential for survival. Functions as the major acyl-CoA retinol acyltransferase (ARAT) in the skin, where it acts to maintain retinoid homeostasis and prevent retinoid toxicity leading to skin and hair disorders. Exhibits additional acyltransferase activities, includin acyl CoA:monoacylglycerol acyltransferase (MGAT), wax monoester and wax diester synthases. Also able to use 1-monoalkylglycerol (1-MAkG) as an acyl acceptor for the synthesis of monoalkyl-monoacylglycerol (MAMAG). This chain is Diacylglycerol O-acyltransferase 1 (DGAT1), found in Chlorocebus aethiops (Green monkey).